The sequence spans 346 residues: Probable dual-specificity RNA methyltransferase RlmN (346 aa).

Glutamate 92 functions as the Proton acceptor in the catalytic mechanism. One can recognise a Radical SAM core domain in the interval 98-332; that stretch reads TDQRLTVCVS…VSLRASRGLD (235 aa). Cysteine 105 and cysteine 337 are oxidised to a cystine. [4Fe-4S] cluster-binding residues include cysteine 112, cysteine 116, and cysteine 119. S-adenosyl-L-methionine-binding positions include 159–160, serine 189, 218–220, and asparagine 294; these read GE and SLH. The S-methylcysteine intermediate role is filled by cysteine 337.

This sequence belongs to the radical SAM superfamily. RlmN family. Requires [4Fe-4S] cluster as cofactor.

It is found in the cytoplasm. It carries out the reaction adenosine(2503) in 23S rRNA + 2 reduced [2Fe-2S]-[ferredoxin] + 2 S-adenosyl-L-methionine = 2-methyladenosine(2503) in 23S rRNA + 5'-deoxyadenosine + L-methionine + 2 oxidized [2Fe-2S]-[ferredoxin] + S-adenosyl-L-homocysteine. The enzyme catalyses adenosine(37) in tRNA + 2 reduced [2Fe-2S]-[ferredoxin] + 2 S-adenosyl-L-methionine = 2-methyladenosine(37) in tRNA + 5'-deoxyadenosine + L-methionine + 2 oxidized [2Fe-2S]-[ferredoxin] + S-adenosyl-L-homocysteine. Functionally, specifically methylates position 2 of adenine 2503 in 23S rRNA and position 2 of adenine 37 in tRNAs. The chain is Probable dual-specificity RNA methyltransferase RlmN from Synechococcus sp. (strain CC9311).